Reading from the N-terminus, the 265-residue chain is MSPNSTGLAVRVIPCLDVDDGRVVKGVNFENLRDAGDPVELAAVYDAEGADELTFLDVTASSSGRATMLDVVRRTAEQVFIPLTVGGGVRTVADVDVLLRAGADKVSVNTAAIARPELLEEMARQFGSQCIVLSVDARTVPPGAVPTPSGWEVTTHGGRRGTGIDAVEWASRGADLGVGEILLNSMDADGTKAGFDLEMLQAVRSAVTVPVIASGGAGAAEHFAPAIEAGADAVLAASVFHFRELTIGQVKAAMAEAGIPVRMVR.

Residues Asp-17 and Asp-136 contribute to the active site.

Belongs to the HisA/HisF family. Heterodimer of HisH and HisF.

The protein localises to the cytoplasm. The enzyme catalyses 5-[(5-phospho-1-deoxy-D-ribulos-1-ylimino)methylamino]-1-(5-phospho-beta-D-ribosyl)imidazole-4-carboxamide + L-glutamine = D-erythro-1-(imidazol-4-yl)glycerol 3-phosphate + 5-amino-1-(5-phospho-beta-D-ribosyl)imidazole-4-carboxamide + L-glutamate + H(+). Its pathway is amino-acid biosynthesis; L-histidine biosynthesis; L-histidine from 5-phospho-alpha-D-ribose 1-diphosphate: step 5/9. Its function is as follows. IGPS catalyzes the conversion of PRFAR and glutamine to IGP, AICAR and glutamate. The HisF subunit catalyzes the cyclization activity that produces IGP and AICAR from PRFAR using the ammonia provided by the HisH subunit. This Mycolicibacterium paratuberculosis (strain ATCC BAA-968 / K-10) (Mycobacterium paratuberculosis) protein is Imidazole glycerol phosphate synthase subunit HisF.